The following is a 201-amino-acid chain: 3-isopropylmalate dehydratase small subunit (201 aa).

Belongs to the LeuD family. LeuD type 1 subfamily. As to quaternary structure, heterodimer of LeuC and LeuD.

It catalyses the reaction (2R,3S)-3-isopropylmalate = (2S)-2-isopropylmalate. Its pathway is amino-acid biosynthesis; L-leucine biosynthesis; L-leucine from 3-methyl-2-oxobutanoate: step 2/4. Its function is as follows. Catalyzes the isomerization between 2-isopropylmalate and 3-isopropylmalate, via the formation of 2-isopropylmaleate. This chain is 3-isopropylmalate dehydratase small subunit, found in Rhodopseudomonas palustris (strain BisA53).